The sequence spans 488 residues: Diacylglycerol O-acyltransferase 1 (488 aa).

Residues 1 to 57 (MGDRGSSRRRRTGSRPSSHGGGGPAAAEEEVRDAAAGPDVGAAGDAPAPAPNKDGDA) form a disordered region. Topologically, residues 1–83 (MGDRGSSRRR…SLFSSDSGFS (83 aa)) are cytoplasmic. Residues 1 to 91 (MGDRGSSRRR…FSNYRGILNW (91 aa)) form an involved in homomerization region. Phosphoserine is present on residues Ser-17 and Ser-18. Positions 34 to 47 (AAAGPDVGAAGDAP) are enriched in low complexity. A helical membrane pass occupies residues 84–118 (NYRGILNWCVVMLILSNARLFLENLIKYGILVDPI). The Lumenal portion of the chain corresponds to 119-130 (QVVSLFLKDPYS). Positions 119–130 (QVVSLFLKDPYS) are extracellular loop 1 (EL1). A helical membrane pass occupies residues 131–156 (WPAPCLVIAANVFAVAAFQVEKRLAV). Residues 131–488 (WPAPCLVIAA…LNYEAPAAEA (358 aa)) are MBOAT fold. Residues 157 to 161 (GALTE) lie on the Cytoplasmic side of the membrane. Residues 162-184 (QAGLLLHVANLATILCFPAAVVL) traverse the membrane as a helical segment. Residues 185–191 (LVESITP) lie on the Lumenal side of the membrane. The helical transmembrane segment at 192-223 (VGSLLALMAHTILFLKLFSYRDVNSWCRRARA) threads the bilayer. The Cytoplasmic portion of the chain corresponds to 224–273 (KAASAGKKASSAAAPHTVSYPDNLTYRDLYYFLFAPTLCYELNFPRSPRI). The interval 224–276 (KAASAGKKASSAAAPHTVSYPDNLTYRDLYYFLFAPTLCYELNFPRSPRIRKR) is intracellular loop 1 (IL1). The helical transmembrane segment at 274-308 (RKRFLLRRILEMLFFTQLQVGLIQQWMVPTIQNSM) threads the bilayer. At 309-315 (KPFKDMD) the chain is on the lumenal side. Residues 316–353 (YSRIIERLLKLAVPNHLIWLIFFYWLFHSCLNAVAELM) form a helical membrane-spanning segment. The Cytoplasmic portion of the chain corresponds to 354–399 (QFGDREFYRDWWNSESVTYFWQNWNIPVHKWCIRHFYKPMLRRGSS). Residues 354-399 (QFGDREFYRDWWNSESVTYFWQNWNIPVHKWCIRHFYKPMLRRGSS) are intracellular loop 2 (IL2). An FYXDWWN motif motif is present at residues 360-366 (FYRDWWN). Residues 374 to 382 (WQNWNIPVH), Tyr-390, and Arg-404 each bind an acyl-CoA. The tract at residues 380–394 (PVHKWCIRHFYKPML) is amphipathic helix (AH). Residues 400–420 (KWMARTGVFLASAFFHEYLVS) traverse the membrane as a helical segment. Residue His-415 is part of the active site. Residues 421–428 (VPLRMFRL) are Lumenal-facing. The helical transmembrane segment at 429 to 447 (WAFTGMMAQIPLAWFVGRF) threads the bilayer. Residues 448-449 (FQ) lie on the Cytoplasmic side of the membrane. A helical membrane pass occupies residues 450 to 481 (GNYGNAAVWLSLIIGQPIAVLMYVHDYYVLNY). Tyr-477 contributes to the an acyl-CoA binding site. The Lumenal segment spans residues 482 to 488 (EAPAAEA).

The protein belongs to the membrane-bound acyltransferase family. Sterol o-acyltransferase subfamily. As to quaternary structure, homodimer or homotetramer; both forms have similar enzymatic activities.

It localises to the endoplasmic reticulum membrane. The enzyme catalyses an acyl-CoA + a 1,2-diacyl-sn-glycerol = a triacyl-sn-glycerol + CoA. It carries out the reaction all-trans-retinol + an acyl-CoA = an all-trans-retinyl ester + CoA. The catalysed reaction is 2-(9Z-octadecenoyl)-glycerol + (9Z)-octadecenoyl-CoA = 1,2-di-(9Z-octadecenoyl)-sn-glycerol + CoA. It catalyses the reaction 1,2-di-(9Z-octadecenoyl)-sn-glycerol + (9Z)-octadecenoyl-CoA = 1,2,3-tri-(9Z-octadecenoyl)-glycerol + CoA. The enzyme catalyses all-trans-retinol + hexadecanoyl-CoA = all-trans-retinyl hexadecanoate + CoA. It carries out the reaction 1-O-(9Z-octadecenyl)-glycerol + (9Z)-octadecenoyl-CoA = 1-O-(9Z-octadecyl)-3-(9Z-octadecenoyl)-glycerol + CoA. The catalysed reaction is 1-O-(9Z-octadecyl)-3-(9Z-octadecenoyl)-glycerol + (9Z)-octadecenoyl-CoA = 1-O-(9Z-octadecenyl)-2,3-di-(9Z-octadecenoyl)glycerol + CoA. It catalyses the reaction 1-(9Z-octadecenoyl)-glycerol + (9Z)-octadecenoyl-CoA = 1,2-di-(9Z-octadecenoyl)-glycerol + CoA. The enzyme catalyses 1,2-di-(9Z-octadecenoyl)-glycerol + (9Z)-octadecenoate + H(+) = 1,2,3-tri-(9Z-octadecenoyl)-glycerol + H2O. It carries out the reaction 1-octadecanoyl-2-(5Z,8Z,11Z,14Z-eicosatetraenoyl)-sn-glycerol + (9Z)-octadecenoyl-CoA = 1-octadecanoyl-2-(5Z,8Z,11Z,14Z)-eicosatetraenoyl-3-(9Z)-octadecenoyl-sn-glycerol + CoA. The catalysed reaction is hexadecane-1,2-diol + 2 hexadecanoyl-CoA = 1,2-O,O-dihexadecanoyl-1,2-hexadecanediol + 2 CoA. It catalyses the reaction hexadecane-1,2-diol + hexadecanoyl-CoA = 2-hydroxyhexadecyl hexadecanoate + CoA. The enzyme catalyses 2-(9Z-octadecenoyl)-glycerol + hexadecanoyl-CoA = 1-hexadecanoyl-2-(9Z-octadecenoyl)-sn-glycerol + CoA. It carries out the reaction 1,2-di-(9Z-octadecenoyl)-sn-glycerol + hexadecanoyl-CoA = 1,2-di-(9Z)-octadecenoyl-3-hexadecanoyl-sn-glycerol + CoA. The catalysed reaction is hexadecan-1-ol + hexadecanoyl-CoA = hexadecanyl hexadecanoate + CoA. It catalyses the reaction 13-cis-retinol + hexadecanoyl-CoA = 13-cis-retinyl hexadecanoate + CoA. The enzyme catalyses 1,3-di-(9Z-octadecenoyl)-glycerol + (9Z)-octadecenoyl-CoA = 1,2,3-tri-(9Z-octadecenoyl)-glycerol + CoA. It carries out the reaction 2,3-di-(9Z)-octadecenoyl-sn-glycerol + (9Z)-octadecenoyl-CoA = 1,2,3-tri-(9Z-octadecenoyl)-glycerol + CoA. It participates in lipid metabolism; glycerolipid metabolism. Its activity is regulated as follows. XP620 is a selective DGAT1 inhibitor. Catalyzes the terminal and only committed step in triacylglycerol synthesis by using diacylglycerol and fatty acyl CoA as substrates. Highly expressed in epithelial cells of the small intestine and its activity is essential for the absorption of dietary fats. In liver, plays a role in esterifying exogenous fatty acids to glycerol, and is required to synthesize fat for storage. Also present in female mammary glands, where it produces fat in the milk. May be involved in VLDL (very low density lipoprotein) assembly. In contrast to DGAT2 it is not essential for survival. Functions as the major acyl-CoA retinol acyltransferase (ARAT) in the skin, where it acts to maintain retinoid homeostasis and prevent retinoid toxicity leading to skin and hair disorders. Exhibits additional acyltransferase activities, includin acyl CoA:monoacylglycerol acyltransferase (MGAT), wax monoester and wax diester synthases. Also able to use 1-monoalkylglycerol (1-MAkG) as an acyl acceptor for the synthesis of monoalkyl-monoacylglycerol (MAMAG). The sequence is that of Diacylglycerol O-acyltransferase 1 from Homo sapiens (Human).